The chain runs to 1214 residues: Myosin-1 (1214 aa).

Residues 1 to 21 form a disordered region; it reads MAIIKRGARNKTAQEPAKRSA. In terms of domain architecture, Myosin motor spans 36–715; the sequence is VGVSDLTLLS…TLFALEHMRD (680 aa). 129-136 is an ATP binding site; that stretch reads GESGAGKT. At Ser-357 the chain carries Phosphoserine. Residues 404 to 486 form an actin-binding region; the sequence is SIGILDIYGF…PGIFAAMNDS (83 aa). IQ domains are found at residues 719 to 739 and 740 to 765; these read YNMAARIQRAWRRFLQRRIDS and ATRIQRAIREKKGGNKYEKLRDEGSK. In terms of domain architecture, TH1 spans 771 to 961; that stretch reads KERRTMSLLG…TILVRRGHPA (191 aa). Disordered stretches follow at residues 926–1090, 1129–1177, and 1193–1214; these read KPGK…SELP, HQGG…AAAQ, and NKMRVESDGEDNGNDDDDDDDW. The span at 965–980 shows a compositional bias: basic residues; it reads QKKKPKKGKGHSKHHS. 2 stretches are compositionally biased toward low complexity: residues 981–1000 and 1037–1057; these read TSTSAPRSSVQSSQPSAPVS and AAQPQATPQPAQVTQPQQKKV. Residues 1058–1067 are compositionally biased toward pro residues; the sequence is APPPPPPPPM. An SH3 domain is found at 1069–1131; the sequence is SSEPKYEAAY…PTNYVVKHQG (63 aa). Residues 1157–1177 show a composition bias toward low complexity; it reads VSSSQSETATTATPASVAAAQ. Positions 1200-1214 are enriched in acidic residues; sequence DGEDNGNDDDDDDDW.

It belongs to the TRAFAC class myosin-kinesin ATPase superfamily. Myosin family. Phosphorylation of the TEDS site (Ser-357) is required for the polarization of the actin cytoskeleton. Phosphorylation probably activates the myosin-I ATPase activity.

It localises to the cytoplasm. Its subcellular location is the cytoskeleton. The protein resides in the actin patch. Its function is as follows. Type-I myosin implicated in the organization of the actin cytoskeleton. Required for proper actin cytoskeleton polarization. At the cell cortex, assembles in patch-like structures together with proteins from the actin-polymerizing machinery and promotes actin assembly. Functions as actin nucleation-promoting factor (NPF) for the Arp2/3 complex. The polypeptide is Myosin-1 (MYO1) (Vanderwaltozyma polyspora (strain ATCC 22028 / DSM 70294 / BCRC 21397 / CBS 2163 / NBRC 10782 / NRRL Y-8283 / UCD 57-17) (Kluyveromyces polysporus)).